Reading from the N-terminus, the 251-residue chain is tRNA (guanine-N(7)-)-methyltransferase (251 aa).

The tract at residues 1-29 is disordered; it reads MTQTLSSQDPQAPAAPPMPGAAGSAPADV. The S-adenosyl-L-methionine site is built by Glu84, Glu109, Asp136, and Asp159. The active site involves Asp159. Lys163 is a substrate binding site. The tract at residues 165–170 is interaction with RNA; it reads RHNKRR. Residues Asp195 and 230 to 233 each bind substrate; that span reads TKFE.

Belongs to the class I-like SAM-binding methyltransferase superfamily. TrmB family.

The enzyme catalyses guanosine(46) in tRNA + S-adenosyl-L-methionine = N(7)-methylguanosine(46) in tRNA + S-adenosyl-L-homocysteine. The protein operates within tRNA modification; N(7)-methylguanine-tRNA biosynthesis. In terms of biological role, catalyzes the formation of N(7)-methylguanine at position 46 (m7G46) in tRNA. This Acidovorax sp. (strain JS42) protein is tRNA (guanine-N(7)-)-methyltransferase.